We begin with the raw amino-acid sequence, 323 residues long: Transaldolase (323 aa).

K133 acts as the Schiff-base intermediate with substrate in catalysis.

Belongs to the transaldolase family. Type 1 subfamily. As to quaternary structure, monomer.

The catalysed reaction is D-sedoheptulose 7-phosphate + D-glyceraldehyde 3-phosphate = D-erythrose 4-phosphate + beta-D-fructose 6-phosphate. It participates in carbohydrate degradation; pentose phosphate pathway; D-glyceraldehyde 3-phosphate and beta-D-fructose 6-phosphate from D-ribose 5-phosphate and D-xylulose 5-phosphate (non-oxidative stage): step 2/3. Transaldolase important for the balance of metabolites in the pentose-phosphate pathway. Involved in xylose fermentation to ethanol. The polypeptide is Transaldolase (Fusarium oxysporum f. sp. lycopersici (strain 4287 / CBS 123668 / FGSC 9935 / NRRL 34936) (Fusarium vascular wilt of tomato)).